The sequence spans 358 residues: Carbamoyl phosphate synthase small chain (358 aa).

2 CPSase regions span residues 1-168 (MYNR…PALG) and 1-171 (MYNR…GRGR). L-glutamine is bound by residues Ser46, Gly220, and Gly222. A Glutamine amidotransferase type-1 domain is found at 172 to 358 (RVVLVDLGMK…FIKNIDNNMK (187 aa)). Cys247 acts as the Nucleophile in catalysis. L-glutamine contacts are provided by Met248, Gln251, Asn289, Gly291, and Tyr292. Catalysis depends on residues His332 and Glu334.

Belongs to the CarA family. Composed of two chains; the small (or glutamine) chain promotes the hydrolysis of glutamine to ammonia, which is used by the large (or ammonia) chain to synthesize carbamoyl phosphate. Tetramer of heterodimers (alpha,beta)4.

It catalyses the reaction hydrogencarbonate + L-glutamine + 2 ATP + H2O = carbamoyl phosphate + L-glutamate + 2 ADP + phosphate + 2 H(+). The catalysed reaction is L-glutamine + H2O = L-glutamate + NH4(+). It participates in amino-acid biosynthesis; L-arginine biosynthesis; carbamoyl phosphate from bicarbonate: step 1/1. The protein operates within pyrimidine metabolism; UMP biosynthesis via de novo pathway; (S)-dihydroorotate from bicarbonate: step 1/3. Its function is as follows. Small subunit of the glutamine-dependent carbamoyl phosphate synthetase (CPSase). CPSase catalyzes the formation of carbamoyl phosphate from the ammonia moiety of glutamine, carbonate, and phosphate donated by ATP, constituting the first step of 2 biosynthetic pathways, one leading to arginine and/or urea and the other to pyrimidine nucleotides. The small subunit (glutamine amidotransferase) binds and cleaves glutamine to supply the large subunit with the substrate ammonia. This is Carbamoyl phosphate synthase small chain from Fusobacterium nucleatum subsp. nucleatum (strain ATCC 25586 / DSM 15643 / BCRC 10681 / CIP 101130 / JCM 8532 / KCTC 2640 / LMG 13131 / VPI 4355).